Here is a 548-residue protein sequence, read N- to C-terminus: Lysine--tRNA ligase (548 aa).

The short motif at 52 to 60 is the 'HIGH' region element; it reads PSGLPHIGT. The 'KMSKS' region signature appears at 300-304; sequence KISKS. Residue Lys-303 coordinates ATP.

This sequence belongs to the class-I aminoacyl-tRNA synthetase family.

It is found in the cytoplasm. It carries out the reaction tRNA(Lys) + L-lysine + ATP = L-lysyl-tRNA(Lys) + AMP + diphosphate. This is Lysine--tRNA ligase from Mesorhizobium japonicum (strain LMG 29417 / CECT 9101 / MAFF 303099) (Mesorhizobium loti (strain MAFF 303099)).